Consider the following 135-residue polypeptide: Large ribosomal subunit protein mL41 (135 aa).

A mitochondrion-targeting transit peptide spans 1–13; it reads MGFLTAVTQGLVR.

The protein belongs to the mitochondrion-specific ribosomal protein mL41 family. As to quaternary structure, component of the mitochondrial ribosome large subunit (39S) which comprises a 16S rRNA and about 50 distinct proteins. Interacts with BCL2.

The protein localises to the mitochondrion. In terms of biological role, component of the mitochondrial ribosome large subunit. Also involved in apoptosis and cell cycle. Enhances p53/TP53 stability, thereby contributing to p53/TP53-induced apoptosis in response to growth-inhibitory condition. Enhances p53/TP53 translocation to the mitochondria. Has the ability to arrest the cell cycle at the G1 phase, possibly by stabilizing the CDKN1A and CDKN1B (p27Kip1) proteins. The polypeptide is Large ribosomal subunit protein mL41 (Mrpl41) (Mus musculus (Mouse)).